The primary structure comprises 376 residues: 2-oxoglutarate synthase subunit KorA (376 aa).

Heterotetramer of the KorA, KorB, KorC and KorD subunits.

It carries out the reaction 2 oxidized [2Fe-2S]-[ferredoxin] + 2-oxoglutarate + CoA = succinyl-CoA + 2 reduced [2Fe-2S]-[ferredoxin] + CO2 + H(+). The chain is 2-oxoglutarate synthase subunit KorA (korA) from Methanothermobacter thermautotrophicus (strain ATCC 29096 / DSM 1053 / JCM 10044 / NBRC 100330 / Delta H) (Methanobacterium thermoautotrophicum).